The following is a 425-amino-acid chain: Arogenate dehydratase 5, chloroplastic (425 aa).

The N-terminal 38 residues, 1-38 (MQTISPAFSCDLKSVIQPNLTAKKARYSHVNGKRVSVR), are a transit peptide targeting the chloroplast. Positions 127-304 (RVAYQGVPGA…NVTRFLMLAR (178 aa)) constitute a Prephenate dehydratase domain. The ACT domain occupies 320 to 411 (VFAAQEHKGT…SFLRVLGSYP (92 aa)).

Expressed in roots, leaves, stems, flowers and siliques. More abundant in stems and roots.

It is found in the plastid. The protein resides in the chloroplast stroma. It catalyses the reaction L-arogenate + H(+) = L-phenylalanine + CO2 + H2O. Its pathway is amino-acid biosynthesis; L-phenylalanine biosynthesis; L-phenylalanine from L-arogenate: step 1/1. Its function is as follows. Converts the prephenate produced from the shikimate-chorismate pathway into phenylalanine. The protein is Arogenate dehydratase 5, chloroplastic of Arabidopsis thaliana (Mouse-ear cress).